Here is a 307-residue protein sequence, read N- to C-terminus: MIKKRSILIVTRKSPLALWQAEFVKQQIENSHPHLACQILGCTTQGDRLTTEKLVDSGGKDLFVKDLQKALLNRDADIAVHSIKDMSACDGPELMVGAFIRREDPRDVLIVKGELSTLPPHAVIGTSSPRRQCQLKKFQPGCKIKEIRGNVGTRLAKLDAGHYEAIVLAAAGLKRLGLENRIHYYFDPHEFIPAIGQGAIGVECRSDDHEMQTLLKSLDHRETRLCVTAERAVNEKLGGDCFTPIAAHAIIKNDQFSLFAMLGKIDGRVIIRATEIGNSEEAKRIGFKVASQLLEQGGDSLLRELKQ.

Cys241 is modified (S-(dipyrrolylmethanemethyl)cysteine).

This sequence belongs to the HMBS family. In terms of assembly, monomer. It depends on dipyrromethane as a cofactor.

The catalysed reaction is 4 porphobilinogen + H2O = hydroxymethylbilane + 4 NH4(+). It functions in the pathway porphyrin-containing compound metabolism; protoporphyrin-IX biosynthesis; coproporphyrinogen-III from 5-aminolevulinate: step 2/4. In terms of biological role, tetrapolymerization of the monopyrrole PBG into the hydroxymethylbilane pre-uroporphyrinogen in several discrete steps. In Coxiella burnetii (strain RSA 331 / Henzerling II), this protein is Porphobilinogen deaminase.